Here is a 647-residue protein sequence, read N- to C-terminus: XK-related protein 4 (647 aa).

Residues 1 to 15 (MAAKSDGRLKMKKSS) show a composition bias toward basic and acidic residues. The tract at residues 1–44 (MAAKSDGRLKMKKSSDVAFTPLQNSDNSGSVQGLAPGLPSGSGA) is disordered. Over residues 21 to 31 (PLQNSDNSGSV) the composition is skewed to polar residues. 2 helical membrane passes run 112–132 (WILAAVAVYFADVGTDIWLAV) and 142–162 (WFGLTLFFVVLGSLSVQVFSF). S197 is subject to Phosphoserine. Residues 197–238 (SAAGEGEVRPSTPQRQASNASKSNIAATNSGSNSNGATRTSG) are disordered. Over residues 207–236 (STPQRQASNASKSNIAATNSGSNSNGATRT) the composition is skewed to polar residues. 8 helical membrane passes run 245–265 (CSFCIWLLQSLIHILQLGQIW), 303–323 (HLLATFLESAPQLVLQLCIIV), 328–348 (LQALQGFTAAASLVSLAWALA), 362–382 (KPISYMAVIIQFCWHFFTIAA), 393–415 (VFQLYFGIFIVLHWCIMTFWIVH), 425–445 (WEEIVFDMVVGIIYIFSWFNV), 454–474 (LFIYYFVILLENTALSALWYL), and 484–504 (FAIPALCVVFSSFLTGVVFML).

Belongs to the XK family. Homodimer; homodimerization takes place upon caspase cleavage. Interacts with the processed C-terminus of XRCC4 (protein XRCC4, C-terminus); interaction promotes the phospholipid scramblase activity. Undergoes proteolytic processing by caspase-3 (CASP3), caspase-6 (CASP6) and caspase-7 (CASP7) to generate the XK-related protein 4, processed form, leading to its activation. Highly expressed in expressed in the brain; weakly expressed in the spleen, thymus, uterus, blood vessels and fetus.

It is found in the cell membrane. It catalyses the reaction a 1,2-diacyl-sn-glycero-3-phospho-L-serine(in) = a 1,2-diacyl-sn-glycero-3-phospho-L-serine(out). With respect to regulation, phospholipid scramblase activity is activated upon caspase cleavage to generate the XK-related protein 4, processed form. Does not act prior the onset of apoptosis. Its activity is regulated as follows. Homodimerizes upon caspase cleavage. Phospholipid scramblase activity is activated following interaction with the processed C-terminus of XRCC4 (protein XRCC4, C-terminus). Phospholipid scramblase that promotes phosphatidylserine exposure on apoptotic cell surface. Phosphatidylserine is a specific marker only present at the surface of apoptotic cells and acts as a specific signal for engulfment. In Mus musculus (Mouse), this protein is XK-related protein 4.